Here is a 181-residue protein sequence, read N- to C-terminus: Biofilm-surface layer protein A (181 aa).

A signal peptide spans 1–28; sequence MKRKLLSSLAISALSLGLLVSAPTASFA.

This sequence belongs to the BslA/BslB family. Forms polymers.

It is found in the secreted. It localises to the cell wall. In terms of biological role, involved in biofilm formation. Self-polymerizes and forms a layer on the surface of biofilms that confers hydrophobicity to the biofilm. The layer is stable and capable of resistance to high mechanical force compression. Required for complex colony architecture. May function synergistically with exopolysaccharides and TasA amyloid fibers to facilitate the assembly of the biofilm matrix. In Bacillus subtilis (strain 168), this protein is Biofilm-surface layer protein A.